Consider the following 144-residue polypeptide: Transcriptional regulator SlyA (144 aa).

The region spanning glutamate 2–histidine 135 is the HTH marR-type domain. Positions glutamine 49–glutamate 72 form a DNA-binding region, H-T-H motif.

The protein belongs to the SlyA family. Homodimer.

Its function is as follows. Transcription regulator that can specifically activate or repress expression of target genes. The chain is Transcriptional regulator SlyA from Escherichia coli O127:H6 (strain E2348/69 / EPEC).